The sequence spans 540 residues: Na(+)/H(+) antiporter NhaS2 (540 aa).

10 consecutive transmembrane segments (helical) span residues 29 to 49, 71 to 91, 117 to 137, 138 to 158, 207 to 227, 256 to 276, 296 to 316, 323 to 343, 358 to 378, and 389 to 409; these read ITTLVENLIILLLVATLVALV, GLSVGLNPELILNFFLPILIF, VVISAAITAVLLKIGLGLAWV, TAAGVSVILTITDTVSVIAAF, IFVAFVGGGLVGLGLGYLCVG, LGVSSAIAVVVAGLVIGNLAL, FGVNTLIFLLVGIEVYPSILL, LIAIVAYQIGRVFSIYPLLYL, VLIAGNVKGSLSMALALALPL, and LVFSTVMVSLIGQGLSLPWVV.

The protein belongs to the monovalent cation:proton antiporter 1 (CPA1) transporter (TC 2.A.36) family.

It localises to the cell membrane. Required for Na(+) uptake into the cell, especially at low external Na(+) concentrations or low Na(+)/K(+) ratios. May be part of a sodium cycle that permits re-entry of sodium into the cell. This is Na(+)/H(+) antiporter NhaS2 (nhaS2) from Synechocystis sp. (strain ATCC 27184 / PCC 6803 / Kazusa).